We begin with the raw amino-acid sequence, 136 residues long: Calcitonin (136 aa).

Positions 1–25 are cleaved as a signal peptide; it reads MGFLKFSPFLVVSILLLYQACGLQA. The propeptide occupies 26–82; it reads VPLRSTLESSPGMATLSEEEARLLAALVQNYMQMKVRELEQEEEQEAEGSSLDSPRS. Position 42 is a phosphoserine (S42). Residues 64–84 are disordered; the sequence is LEQEEEQEAEGSSLDSPRSKR. Cysteines 85 and 91 form a disulfide. N87 is a glycosylation site (N-linked (GlcNAc...) asparagine). Residues 114–136 form a disordered region; sequence GAPGKKRDMAKDLETNHHPYFGN. P116 carries the post-translational modification Proline amide. The span at 118–130 shows a compositional bias: basic and acidic residues; the sequence is KKRDMAKDLETNH. A propeptide spanning residues 121-136 is cleaved from the precursor; sequence DMAKDLETNHHPYFGN.

This sequence belongs to the calcitonin family.

It localises to the secreted. In terms of biological role, calcitonin is a peptide hormone that causes a rapid but short-lived drop in the level of calcium and phosphate in blood by promoting the incorporation of those ions in the bones. Calcitonin function is mediated by the calcitonin receptor/CALCR and the CALCR-RAMP2 (AMYR2) receptor complex. This is Calcitonin from Rattus norvegicus (Rat).